Reading from the N-terminus, the 369-residue chain is UDP-N-acetylenolpyruvoylglucosamine reductase (369 aa).

One can recognise an FAD-binding PCMH-type domain in the interval 29–202 (VGPIARRVIT…LEVEFALDPS (174 aa)). Arg-176 is a catalytic residue. Residue Ser-257 is the Proton donor of the active site. The active site involves Glu-361.

This sequence belongs to the MurB family. It depends on FAD as a cofactor.

It localises to the cytoplasm. The enzyme catalyses UDP-N-acetyl-alpha-D-muramate + NADP(+) = UDP-N-acetyl-3-O-(1-carboxyvinyl)-alpha-D-glucosamine + NADPH + H(+). Its pathway is cell wall biogenesis; peptidoglycan biosynthesis. Its function is as follows. Cell wall formation. The sequence is that of UDP-N-acetylenolpyruvoylglucosamine reductase from Mycobacterium tuberculosis (strain ATCC 25177 / H37Ra).